The following is a 311-amino-acid chain: ADP-L-glycero-D-manno-heptose-6-epimerase (311 aa).

NADP(+) is bound by residues 10–11 (FI), 31–32 (DD), K38, K53, 75–79 (EGACS), and N92. The Proton acceptor role is filled by Y139. Residue K143 coordinates NADP(+). N174 is a binding site for substrate. Residues V175 and K183 each contribute to the NADP(+) site. The active-site Proton acceptor is K183. Substrate contacts are provided by residues S185, H192, 206–209 (FEGE), R212, and Y275.

This sequence belongs to the NAD(P)-dependent epimerase/dehydratase family. HldD subfamily. Homopentamer. It depends on NADP(+) as a cofactor.

The enzyme catalyses ADP-D-glycero-beta-D-manno-heptose = ADP-L-glycero-beta-D-manno-heptose. Its pathway is nucleotide-sugar biosynthesis; ADP-L-glycero-beta-D-manno-heptose biosynthesis; ADP-L-glycero-beta-D-manno-heptose from D-glycero-beta-D-manno-heptose 7-phosphate: step 4/4. Catalyzes the interconversion between ADP-D-glycero-beta-D-manno-heptose and ADP-L-glycero-beta-D-manno-heptose via an epimerization at carbon 6 of the heptose. The polypeptide is ADP-L-glycero-D-manno-heptose-6-epimerase (Psychromonas ingrahamii (strain DSM 17664 / CCUG 51855 / 37)).